The chain runs to 194 residues: Lysozyme g (194 aa).

Active-site residues include glutamate 71 and aspartate 84.

Belongs to the glycosyl hydrolase 23 family. In terms of tissue distribution, expressed in intestine, liver, spleen, anterior kidney, posterior kidney, heart, gill, muscle and leukocytes.

It catalyses the reaction Hydrolysis of (1-&gt;4)-beta-linkages between N-acetylmuramic acid and N-acetyl-D-glucosamine residues in a peptidoglycan and between N-acetyl-D-glucosamine residues in chitodextrins.. In terms of biological role, has lytic activity against M.lysodeikticus, V.alginolyticus from Epinephelus fario, V.vulnificus from culture water, A.hydrophila from soft-shell turtle, A.hydrophila from goldfish and V.parahaemolyticus, P.fluorescens and V.fluvialis from culture water. The protein is Lysozyme g of Epinephelus coioides (Orange-spotted grouper).